We begin with the raw amino-acid sequence, 344 residues long: Acireductone dioxygenase (344 aa).

Residues H92, H94, E98, and H137 each contribute to the Fe(2+) site. H92, H94, E98, and H137 together coordinate Ni(2+).

It belongs to the acireductone dioxygenase (ARD) family. It depends on Fe(2+) as a cofactor. Ni(2+) serves as cofactor.

The protein localises to the cytoplasm. It is found in the nucleus. The catalysed reaction is 1,2-dihydroxy-5-(methylsulfanyl)pent-1-en-3-one + O2 = 4-methylsulfanyl-2-oxobutanoate + formate + 2 H(+). It catalyses the reaction 1,2-dihydroxy-5-(methylsulfanyl)pent-1-en-3-one + O2 = 3-(methylsulfanyl)propanoate + CO + formate + 2 H(+). It functions in the pathway amino-acid biosynthesis; L-methionine biosynthesis via salvage pathway; L-methionine from S-methyl-5-thio-alpha-D-ribose 1-phosphate: step 5/6. Functionally, catalyzes 2 different reactions between oxygen and the acireductone 1,2-dihydroxy-3-keto-5-methylthiopentene (DHK-MTPene) depending upon the metal bound in the active site. Fe-containing acireductone dioxygenase (Fe-ARD) produces formate and 2-keto-4-methylthiobutyrate (KMTB), the alpha-ketoacid precursor of methionine in the methionine recycle pathway. Ni-containing acireductone dioxygenase (Ni-ARD) produces methylthiopropionate, carbon monoxide and formate, and does not lie on the methionine recycle pathway. This is Acireductone dioxygenase from Leishmania major.